Consider the following 339-residue polypeptide: Glycerol-3-phosphate dehydrogenase [NAD(P)+] (339 aa).

Positions 15, 16, 36, and 110 each coordinate NADPH. Sn-glycerol 3-phosphate-binding residues include Lys-110, Gly-139, and Thr-141. An NADPH-binding site is contributed by Ala-143. The sn-glycerol 3-phosphate site is built by Lys-195, Asp-248, Ser-258, Arg-259, and Asn-260. Lys-195 acts as the Proton acceptor in catalysis. Arg-259 is a binding site for NADPH. Residues Val-283 and Glu-285 each coordinate NADPH.

Belongs to the NAD-dependent glycerol-3-phosphate dehydrogenase family.

Its subcellular location is the cytoplasm. It catalyses the reaction sn-glycerol 3-phosphate + NAD(+) = dihydroxyacetone phosphate + NADH + H(+). The enzyme catalyses sn-glycerol 3-phosphate + NADP(+) = dihydroxyacetone phosphate + NADPH + H(+). Its pathway is membrane lipid metabolism; glycerophospholipid metabolism. In terms of biological role, catalyzes the reduction of the glycolytic intermediate dihydroxyacetone phosphate (DHAP) to sn-glycerol 3-phosphate (G3P), the key precursor for phospholipid synthesis. The chain is Glycerol-3-phosphate dehydrogenase [NAD(P)+] from Yersinia pseudotuberculosis serotype O:1b (strain IP 31758).